Consider the following 237-residue polypeptide: Large ribosomal subunit protein bL25 (237 aa).

The N-terminal domain stretch occupies residues 1–104; that stretch reads MELTAKPRTP…SVPVHTTGRS (104 aa). Residues 105–189 form a middle domain region; it reads QGEVQGGLVD…ELEAEVQAAQ (85 aa). The C-terminal domain stretch occupies residues 190–237; the sequence is VAGLVAAGELSEEAAEAVLEGDASLEEVKAEASEDNAGTDSEDNSDAQ. The tract at residues 205 to 237 is disordered; it reads EAVLEGDASLEEVKAEASEDNAGTDSEDNSDAQ.

It belongs to the bacterial ribosomal protein bL25 family. CTC subfamily. As to quaternary structure, part of the 50S ribosomal subunit. Contacts proteins L11 and L16, the A site tRNA, and the 5S and 23S rRNAs.

Functionally, this is one of 3 proteins that mediate the attachment of the 5S rRNA onto the large ribosomal subunit. This protein has three domains. The N-terminal one is bound on the solvent face, the middle domain fills the space between the 5S rRNA and the L11 arm contacting the 23S rRNA while the C-terminal domain is on the edge of the intersubunit interface and contacts the A site. The protein conformation changes upon binding of a tRNA mimic to the A site, although the mimic does not interact directly with CTC itself, consistent with CTCs presumed role in moderating A site binding. The sequence is that of Large ribosomal subunit protein bL25 (rplY) from Deinococcus radiodurans (strain ATCC 13939 / DSM 20539 / JCM 16871 / CCUG 27074 / LMG 4051 / NBRC 15346 / NCIMB 9279 / VKM B-1422 / R1).